Here is a 553-residue protein sequence, read N- to C-terminus: Dihydroxy-acid dehydratase (553 aa).

Asp78 contacts Mg(2+). Cys119 contributes to the [2Fe-2S] cluster binding site. Mg(2+) is bound by residues Asp120 and Lys121. N6-carboxylysine is present on Lys121. [2Fe-2S] cluster is bound at residue Cys193. Mg(2+) is bound at residue Glu441. Catalysis depends on Ser467, which acts as the Proton acceptor.

This sequence belongs to the IlvD/Edd family. In terms of assembly, homodimer. [2Fe-2S] cluster serves as cofactor. Mg(2+) is required as a cofactor.

The catalysed reaction is (2R)-2,3-dihydroxy-3-methylbutanoate = 3-methyl-2-oxobutanoate + H2O. The enzyme catalyses (2R,3R)-2,3-dihydroxy-3-methylpentanoate = (S)-3-methyl-2-oxopentanoate + H2O. It participates in amino-acid biosynthesis; L-isoleucine biosynthesis; L-isoleucine from 2-oxobutanoate: step 3/4. It functions in the pathway amino-acid biosynthesis; L-valine biosynthesis; L-valine from pyruvate: step 3/4. Its function is as follows. Functions in the biosynthesis of branched-chain amino acids. Catalyzes the dehydration of (2R,3R)-2,3-dihydroxy-3-methylpentanoate (2,3-dihydroxy-3-methylvalerate) into 2-oxo-3-methylpentanoate (2-oxo-3-methylvalerate) and of (2R)-2,3-dihydroxy-3-methylbutanoate (2,3-dihydroxyisovalerate) into 2-oxo-3-methylbutanoate (2-oxoisovalerate), the penultimate precursor to L-isoleucine and L-valine, respectively. This Geobacter sp. (strain M21) protein is Dihydroxy-acid dehydratase.